Reading from the N-terminus, the 122-residue chain is MTAGTRPEVLHLYRQIFRIARKWQAASGLMEETIKEREYIVDEARKLFHRNKQITDVAMIKECTEECKARIEIGLHYRNPYPRPIHLPPLGLALPHSKVFRAQEKLRKQAKPVYLKSYDEIS.

The protein belongs to the complex I LYR family.

The sequence is that of LYR motif-containing protein 1 (lyrm1) from Xenopus laevis (African clawed frog).